We begin with the raw amino-acid sequence, 361 residues long: Mitogen-activated protein kinase 1 (361 aa).

One can recognise a Protein kinase domain in the interval 28 to 316 (YINLAYIGEG…VEAALAHPYL (289 aa)). Residues 34-42 (IGEGAYGMV) and K57 contribute to the ATP site. D152 functions as the Proton acceptor in the catalytic mechanism. At T188 the chain carries Phosphothreonine. The TXY signature appears at 188–190 (TEY). Phosphotyrosine is present on Y190.

It belongs to the protein kinase superfamily. CMGC Ser/Thr protein kinase family. MAP kinase subfamily. As to quaternary structure, interacts with CDK2AP2. Mg(2+) serves as cofactor. In terms of processing, dually phosphorylated on Thr-188 and Tyr-190, which activates the enzyme. Expressed in the central nervous system, kidney, liver, intestine and the hematopoietic system. Also found in heart, muscle, pancreas and lung.

The protein localises to the cytoplasm. Its subcellular location is the cytoskeleton. It localises to the microtubule organizing center. The protein resides in the centrosome. It is found in the spindle. It catalyses the reaction L-seryl-[protein] + ATP = O-phospho-L-seryl-[protein] + ADP + H(+). It carries out the reaction L-threonyl-[protein] + ATP = O-phospho-L-threonyl-[protein] + ADP + H(+). With respect to regulation, activated by tyrosine phosphorylation during the M phase of the meiotic cell cycle. Dephosphorylated and inactivated by DUSP1. In terms of biological role, serine/threonine kinase which acts as an essential component of the MAP kinase signal transduction pathway. Plays an important role in the MAPK/ERK cascade. Depending on the cellular context, this cascade mediates diverse biological functions such as cell growth, adhesion, survival and differentiation through the regulation of transcription, translation, cytoskeletal rearrangements. The MAPK/ERK cascade also plays a role in initiation and regulation of meiosis, mitosis, and postmitotic functions in differentiated cells by phosphorylating a number of transcription factors. Many of the substrates are localized in the nucleus, and seem to participate in the regulation of transcription upon stimulation. However, other substrates are found in the cytosol as well as in other cellular organelles, and those are responsible for processes such as translation, mitosis and apoptosis. Moreover, the MAPK/ERK cascade is also involved in the regulation of the endosomal dynamics, including lysosome processing and endosome cycling through the perinuclear recycling compartment (PNRC); as well as in the fragmentation of the Golgi apparatus during mitosis. Phosphorylates microtubule-associated protein 2 (MAP2), myelin basic protein (MBP) and Elk-1. Phosphorylates dual specificity protein phosphatase 1 (DUSP1) during meiosis, increasing its stability. Activated by M phase promoting factor (MPF). Plays a role in the spindle assembly checkpoint. This Xenopus laevis (African clawed frog) protein is Mitogen-activated protein kinase 1 (mapk1).